The following is a 116-amino-acid chain: MSLSIELEFKQDVLLVRLTGELDHHTAEELRSKITEAIEKESISHLILNLQHLTFMDSSGLGVILGRYKQVHNNGGEMVVCAISPAIERLFNMSGLFKIIRFEPNEANALQKLGVA.

The region spanning 3–113 (LSIELEFKQD…PNEANALQKL (111 aa)) is the STAS domain. Residue serine 58 is modified to Phosphoserine.

The protein belongs to the anti-sigma-factor antagonist family. Phosphorylated by SpoIIAB on a serine residue.

In terms of biological role, in the phosphorylated form it could act as an anti-anti-sigma factor that counteracts SpoIIAB and thus releases sigma f from inhibition. This chain is Anti-sigma F factor antagonist (spoIIAA), found in Priestia megaterium (Bacillus megaterium).